Consider the following 580-residue polypeptide: UPF0329 protein ECU06_0080 (580 aa).

Residues 308 to 330 show a composition bias toward basic and acidic residues; the sequence is RQKRREREMEKSMKELLRDEEKA. Residues 308–384 are disordered; sequence RQKRREREME…KTGKKSKGGR (77 aa). The span at 331-340 shows a compositional bias: basic residues; the sequence is KSKKGRKKKS. Over residues 351 to 363 the composition is skewed to acidic residues; the sequence is SETEEVEASEEME. Residues 372-384 show a composition bias toward basic residues; that stretch reads ARRKTGKKSKGGR.

This sequence belongs to the UPF0329 family.

The chain is UPF0329 protein ECU06_0080 from Encephalitozoon cuniculi (strain GB-M1) (Microsporidian parasite).